The primary structure comprises 314 residues: 2,3-dihydroxyphenylpropionate/2,3-dihydroxicinnamic acid 1,2-dioxygenase (314 aa).

Histidine 115 (proton donor) is an active-site residue. Histidine 179 functions as the Proton acceptor in the catalytic mechanism.

The protein belongs to the LigB/MhpB extradiol dioxygenase family. As to quaternary structure, homotetramer. The cofactor is Fe(2+).

It catalyses the reaction 3-(2,3-dihydroxyphenyl)propanoate + O2 = (2Z,4E)-2-hydroxy-6-oxonona-2,4-dienedioate + H(+). It carries out the reaction (2E)-3-(2,3-dihydroxyphenyl)prop-2-enoate + O2 = (2Z,4E,7E)-2-hydroxy-6-oxonona-2,4,7-trienedioate + H(+). Its pathway is aromatic compound metabolism; 3-phenylpropanoate degradation. Its function is as follows. Catalyzes the non-heme iron(II)-dependent oxidative cleavage of 2,3-dihydroxyphenylpropionic acid and 2,3-dihydroxicinnamic acid into 2-hydroxy-6-ketononadienedioate and 2-hydroxy-6-ketononatrienedioate, respectively. The polypeptide is 2,3-dihydroxyphenylpropionate/2,3-dihydroxicinnamic acid 1,2-dioxygenase (Escherichia coli O157:H7).